Consider the following 55-residue polypeptide: Large ribosomal subunit protein bL33 (55 aa).

It belongs to the bacterial ribosomal protein bL33 family.

In Methylocella silvestris (strain DSM 15510 / CIP 108128 / LMG 27833 / NCIMB 13906 / BL2), this protein is Large ribosomal subunit protein bL33.